Consider the following 153-residue polypeptide: Ribonuclease VapC6 (153 aa).

Positions 6 to 152 (VFIDSSVMVG…EKVDFIEIIK (147 aa)) constitute a PINc domain. Mg(2+)-binding residues include D9 and D120.

Belongs to the PINc/VapC protein family. Mg(2+) serves as cofactor.

In terms of biological role, toxic component of a type II toxin-antitoxin (TA) system. An RNase. This is Ribonuclease VapC6 from Methanocaldococcus jannaschii (strain ATCC 43067 / DSM 2661 / JAL-1 / JCM 10045 / NBRC 100440) (Methanococcus jannaschii).